A 940-amino-acid chain; its full sequence is Isoleucine--tRNA ligase (940 aa).

A 'HIGH' region motif is present at residues 58–68; that stretch reads PYANGSIHIGH. An L-isoleucyl-5'-AMP-binding site is contributed by Glu-564. The 'KMSKS' region motif lies at 605 to 609; sequence KMSKS. Lys-608 serves as a coordination point for ATP. Zn(2+)-binding residues include Cys-903, Cys-906, Cys-923, and Cys-926.

This sequence belongs to the class-I aminoacyl-tRNA synthetase family. IleS type 1 subfamily. As to quaternary structure, monomer. It depends on Zn(2+) as a cofactor.

Its subcellular location is the cytoplasm. It catalyses the reaction tRNA(Ile) + L-isoleucine + ATP = L-isoleucyl-tRNA(Ile) + AMP + diphosphate. Its function is as follows. Catalyzes the attachment of isoleucine to tRNA(Ile). As IleRS can inadvertently accommodate and process structurally similar amino acids such as valine, to avoid such errors it has two additional distinct tRNA(Ile)-dependent editing activities. One activity is designated as 'pretransfer' editing and involves the hydrolysis of activated Val-AMP. The other activity is designated 'posttransfer' editing and involves deacylation of mischarged Val-tRNA(Ile). This is Isoleucine--tRNA ligase from Shewanella baltica (strain OS155 / ATCC BAA-1091).